The chain runs to 344 residues: N-acetyl-gamma-glutamyl-phosphate reductase (344 aa).

Residue C149 is part of the active site.

Belongs to the NAGSA dehydrogenase family. Type 1 subfamily.

Its subcellular location is the cytoplasm. The catalysed reaction is N-acetyl-L-glutamate 5-semialdehyde + phosphate + NADP(+) = N-acetyl-L-glutamyl 5-phosphate + NADPH + H(+). Its pathway is amino-acid biosynthesis; L-arginine biosynthesis; N(2)-acetyl-L-ornithine from L-glutamate: step 3/4. Its function is as follows. Catalyzes the NADPH-dependent reduction of N-acetyl-5-glutamyl phosphate to yield N-acetyl-L-glutamate 5-semialdehyde. The sequence is that of N-acetyl-gamma-glutamyl-phosphate reductase from Syntrophobacter fumaroxidans (strain DSM 10017 / MPOB).